We begin with the raw amino-acid sequence, 76 residues long: Exodeoxyribonuclease 7 small subunit (76 aa).

Belongs to the XseB family. As to quaternary structure, heterooligomer composed of large and small subunits.

It is found in the cytoplasm. The enzyme catalyses Exonucleolytic cleavage in either 5'- to 3'- or 3'- to 5'-direction to yield nucleoside 5'-phosphates.. In terms of biological role, bidirectionally degrades single-stranded DNA into large acid-insoluble oligonucleotides, which are then degraded further into small acid-soluble oligonucleotides. The sequence is that of Exodeoxyribonuclease 7 small subunit from Legionella pneumophila (strain Paris).